Reading from the N-terminus, the 216-residue chain is Transmembrane protein 186 (216 aa).

Topologically, residues 1 to 68 (MAFLLRAVPR…IYRFNAIRAL (68 aa)) are mitochondrial matrix. The chain crosses the membrane as a helical span at residues 69–91 (GFLSRLKLAQTAVTVVALPPGFY). The Mitochondrial intermembrane segment spans residues 92–103 (CYSQGLMTLSSL). The chain crosses the membrane as a helical span at residues 104-124 (GLMSGIASFALVMLCWMSHFF). The Mitochondrial matrix portion of the chain corresponds to 125 to 216 (RRLVGILYVN…GTLATLKNSK (92 aa)).

This sequence belongs to the TMEM186 family. Part of the mitochondrial complex I assembly/MCIA complex that comprises at least the core subunits TMEM126B, NDUFAF1, ECSIT and ACAD9 and complement subunits such as COA1 and TMEM186. Interacts with MT-ND3.

The protein localises to the mitochondrion inner membrane. Functionally, as part of the MCIA complex, required for efficient assembly of the mitochondrial complex I. This is Transmembrane protein 186 from Rattus norvegicus (Rat).